The chain runs to 191 residues: Threonylcarbamoyl-AMP synthase (191 aa).

Positions 10 to 191 (VPKLTQCVRT…DLYTDAIIRA (182 aa)) constitute a YrdC-like domain.

This sequence belongs to the SUA5 family. TsaC subfamily.

Its subcellular location is the cytoplasm. The catalysed reaction is L-threonine + hydrogencarbonate + ATP = L-threonylcarbamoyladenylate + diphosphate + H2O. Functionally, required for the formation of a threonylcarbamoyl group on adenosine at position 37 (t(6)A37) in tRNAs that read codons beginning with adenine. Catalyzes the conversion of L-threonine, HCO(3)(-)/CO(2) and ATP to give threonylcarbamoyl-AMP (TC-AMP) as the acyladenylate intermediate, with the release of diphosphate. The chain is Threonylcarbamoyl-AMP synthase from Saccharophagus degradans (strain 2-40 / ATCC 43961 / DSM 17024).